An 82-amino-acid polypeptide reads, in one-letter code: Translational regulator CsrA (82 aa).

This sequence belongs to the CsrA/RsmA family. As to quaternary structure, homodimer; the beta-strands of each monomer intercalate to form a hydrophobic core, while the alpha-helices form wings that extend away from the core.

The protein localises to the cytoplasm. A translational regulator that binds mRNA to regulate translation initiation and/or mRNA stability. Usually binds in the 5'-UTR at or near the Shine-Dalgarno sequence preventing ribosome-binding, thus repressing translation. Its main target seems to be the major flagellin gene, while its function is anatagonized by FliW. In Geobacillus kaustophilus (strain HTA426), this protein is Translational regulator CsrA.